Consider the following 794-residue polypeptide: Copper-exporting P-type ATPase (794 aa).

HMA domains follow at residues 4–69 and 71–137; these read TTLT…YDVA and EQVE…YDAE. Positions 15, 18, 82, and 85 each coordinate Cu(+). Helical transmembrane passes span 161-181, 186-206, 225-245, 255-275, 410-430, and 437-457; these read IISAILSLPLLLVMVVHISPI, ILVNPWVQLILSTPVQFIIGW, VLVAVGTSAAYFYSIYEMMMW, LYFETSAILITLILLGKYLEA, YFVPIVVSIAVITFIIWIIFV, and PALVSAISVLVIACPCALGLA. The active-site 4-aspartylphosphate intermediate is aspartate 494. Mg(2+) contacts are provided by aspartate 689 and aspartate 693. Transmembrane regions (helical) follow at residues 747-767 and 773-789; these read LFWAFGYNVAGIPIAACGLLA and AAMALSSVSVVMNALRL.

This sequence belongs to the cation transport ATPase (P-type) (TC 3.A.3) family. Type IB subfamily.

The protein resides in the cell membrane. It catalyses the reaction Cu(+)(in) + ATP + H2O = Cu(+)(out) + ADP + phosphate + H(+). Its function is as follows. Involved in copper export. The protein is Copper-exporting P-type ATPase (copA) of Staphylococcus epidermidis (strain ATCC 35984 / DSM 28319 / BCRC 17069 / CCUG 31568 / BM 3577 / RP62A).